The following is a 288-amino-acid chain: 4-diphosphocytidyl-2-C-methyl-D-erythritol kinase (288 aa).

Lys-13 is an active-site residue. 96–106 (PIGGGIGGGSS) provides a ligand contact to ATP. Asp-138 is an active-site residue.

This sequence belongs to the GHMP kinase family. IspE subfamily.

The enzyme catalyses 4-CDP-2-C-methyl-D-erythritol + ATP = 4-CDP-2-C-methyl-D-erythritol 2-phosphate + ADP + H(+). It functions in the pathway isoprenoid biosynthesis; isopentenyl diphosphate biosynthesis via DXP pathway; isopentenyl diphosphate from 1-deoxy-D-xylulose 5-phosphate: step 3/6. Its function is as follows. Catalyzes the phosphorylation of the position 2 hydroxy group of 4-diphosphocytidyl-2C-methyl-D-erythritol. This is 4-diphosphocytidyl-2-C-methyl-D-erythritol kinase from Aliivibrio salmonicida (strain LFI1238) (Vibrio salmonicida (strain LFI1238)).